A 399-amino-acid chain; its full sequence is MWQLLAAACWMLLLGSMYGYDKKGNNANPEANMNISQIISYWGYPYEEYDVTTKDGYILGIYRIPHGRGCPGRTAPKPAVYLQHGLIASASNWICNLPNNSLAFLLADSGYDVWLGNSRGNTWSRKHLKLSPKSPEYWAFSLDEMAKYDLPATINFIIEKTGQKRLYYVGHSQGTTIAFIAFSTNPELAKKIKIFFALAPVVTVKYTQSPMKKLTTLSRRVVKVLFGDKMFHPHTLFDQFIATKVCNRKLFRRICSNFLFTLSGFDPQNLNMSRLDVYLSHNPAGTSVQNMLHWAQAVNSGQLQAFDWGNSDQNMMHFHQLTPPLYNITKMEVPTAIWNGGQDIVADPKDVENLLPQIANLIYYKLIPHYNHVDFYLGEDAPQEIYQDLIILMEEYLQN.

An N-terminal signal peptide occupies residues M1–G19. The AB hydrolase-1 domain occupies P78–G378. S172 functions as the Nucleophile in the catalytic mechanism. C246 and C255 form a disulfide bridge. 2 N-linked (GlcNAc...) asparagine glycosylation sites follow: N271 and N327. Residues D343 and H372 each act as charge relay system in the active site.

This sequence belongs to the AB hydrolase superfamily. Lipase family. As to expression, exclusively expressed in the epidermis within the granular keratinocytes.

Its subcellular location is the secreted. Its function is as follows. Plays a highly specific role in the last step of keratinocyte differentiation. May have an essential function in lipid metabolism of the most differentiated epidermal layers. This chain is Lipase member K (LIPK), found in Homo sapiens (Human).